Here is a 235-residue protein sequence, read N- to C-terminus: Repeat element protein (235 aa).

The segment at 57–235 (IFQELLERLS…ARRKKCRFSQ (179 aa)) is repeat element.

The chain is Repeat element protein from Campoletis sonorensis (CsIV).